The chain runs to 281 residues: Pantothenate synthetase (281 aa).

30–37 (MGALHHGH) is an ATP binding site. The Proton donor role is filled by histidine 37. Residue glutamine 61 participates in (R)-pantoate binding. Glutamine 61 serves as a coordination point for beta-alanine. 147–150 (GEKD) serves as a coordination point for ATP. Glutamine 153 contacts (R)-pantoate. ATP-binding positions include leucine 176 and 184 to 187 (SSSR).

The protein belongs to the pantothenate synthetase family. Homodimer.

The protein localises to the cytoplasm. The enzyme catalyses (R)-pantoate + beta-alanine + ATP = (R)-pantothenate + AMP + diphosphate + H(+). The protein operates within cofactor biosynthesis; (R)-pantothenate biosynthesis; (R)-pantothenate from (R)-pantoate and beta-alanine: step 1/1. Functionally, catalyzes the condensation of pantoate with beta-alanine in an ATP-dependent reaction via a pantoyl-adenylate intermediate. This is Pantothenate synthetase from Bartonella bacilliformis (strain ATCC 35685 / KC583 / Herrer 020/F12,63).